The primary structure comprises 132 residues: ATP synthase epsilon chain (132 aa).

Basic and acidic residues predominate over residues 88-102 (IDKERAEAARQRAQE). The disordered stretch occupies residues 88 to 112 (IDKERAEAARQRAQERLNSQSDDTD).

It belongs to the ATPase epsilon chain family. In terms of assembly, F-type ATPases have 2 components, CF(1) - the catalytic core - and CF(0) - the membrane proton channel. CF(1) has five subunits: alpha(3), beta(3), gamma(1), delta(1), epsilon(1). CF(0) has three main subunits: a, b and c. The F(1)F(0) complex interacts with SpoIIIJ and YqjG; YqgA is found in the same complex.

Its subcellular location is the cell membrane. Functionally, produces ATP from ADP in the presence of a proton gradient across the membrane. The protein is ATP synthase epsilon chain (atpC) of Bacillus subtilis (strain 168).